The primary structure comprises 889 residues: 97 kDa heat shock protein (889 aa).

Disordered regions lie at residues 504-622 and 812-889; these read EDAM…ATTD and FVCD…MELD. Residues 549–585 are compositionally biased toward basic and acidic residues; that stretch reads SADKEEQADNGSKETSKDSKDQTSESSKSDKESKDQN. The span at 586–597 shows a compositional bias: polar residues; the sequence is SEGSKSDNSSTE. Over residues 869 to 889 the composition is skewed to basic and acidic residues; the sequence is ASKEGETKPDETKPDVEMELD.

The protein belongs to the heat shock protein 70 family.

Its function is as follows. Cell surface recognition protein that binds acrosome-reacted sperm and thereby mediates binding and subsequent fusion of the sperm and egg. This Strongylocentrotus purpuratus (Purple sea urchin) protein is 97 kDa heat shock protein.